A 516-amino-acid chain; its full sequence is GMP synthase [glutamine-hydrolyzing] (516 aa).

A Glutamine amidotransferase type-1 domain is found at 8–198; sequence KILILDFGSQ…ALNICKCDAL (191 aa). Cysteine 84 acts as the Nucleophile in catalysis. Residues histidine 172 and glutamate 174 contribute to the active site. The GMPS ATP-PPase domain maps to 199-391; the sequence is WNIENIIEND…LGLPYNMLYR (193 aa). 226–232 contributes to the ATP binding site; it reads SGGVDSS.

In terms of assembly, homodimer.

It catalyses the reaction XMP + L-glutamine + ATP + H2O = GMP + L-glutamate + AMP + diphosphate + 2 H(+). It functions in the pathway purine metabolism; GMP biosynthesis; GMP from XMP (L-Gln route): step 1/1. Catalyzes the synthesis of GMP from XMP. In Francisella philomiragia subsp. philomiragia (strain ATCC 25017 / CCUG 19701 / FSC 153 / O#319-036), this protein is GMP synthase [glutamine-hydrolyzing].